The primary structure comprises 326 residues: Protein phosphatase PTC7 homolog fig (326 aa).

The interval 40–83 (VQGKSKPRSPHLTSPQCSPEHRPRRFRPPSASGRTAFSSAPRPK) is disordered. The PPM-type phosphatase domain occupies 64–314 (RFRPPSASGR…DDITVVLASV (251 aa)). Residues Asp91, Gly92, and Asp236 each coordinate Mn(2+).

It belongs to the PP2C family. Requires Mg(2+) as cofactor. Mn(2+) is required as a cofactor.

The catalysed reaction is O-phospho-L-seryl-[protein] + H2O = L-seryl-[protein] + phosphate. It carries out the reaction O-phospho-L-threonyl-[protein] + H2O = L-threonyl-[protein] + phosphate. The chain is Protein phosphatase PTC7 homolog fig from Drosophila persimilis (Fruit fly).